The sequence spans 498 residues: Ammonium transporter 1 member 1 (498 aa).

A run of 11 helical transmembrane segments spans residues 39–59, 74–94, 120–140, 148–168, 192–212, 236–256, 274–296, 307–327, 331–351, 360–380, and 411–431; these read LLFS…LCAG, VLDA…FAFG, FFLF…GSIA, YLIY…HWIW, FAGS…GALI, LVVL…PGSF, SGVG…TTLF, VVDV…GCSV, WAAI…NALA, LEAA…TALF, and VIQI…LFYG.

The protein belongs to the ammonia transporter channel (TC 1.A.11.2) family. In terms of tissue distribution, expressed in roots and shoots.

It is found in the membrane. Ammonium transporter probably involved in ammonium uptake from the soil. The polypeptide is Ammonium transporter 1 member 1 (AMT1-1) (Oryza sativa subsp. japonica (Rice)).